We begin with the raw amino-acid sequence, 206 residues long: Inner membrane protein YnjF (206 aa).

The Periplasmic portion of the chain corresponds to 1-37; that stretch reads MLDRHLHPRIKPLLHQCVRVLDKPGITPDGLTLVGFA. A helical transmembrane segment spans residues 38–60; that stretch reads IGVLALPFLALGWYLAALVVILL. Topologically, residues 61–79 are cytoplasmic; that stretch reads NRLLDGLDGALARRRELTD. A helical membrane pass occupies residues 80–102; it reads AGGFLDISLDFLFYALVPFGFIL. Residues 103-111 are Periplasmic-facing; sequence AAPEQNALA. A helical membrane pass occupies residues 112–134; it reads GGWLLFAFIGTGSSFLAFAALAA. The Cytoplasmic portion of the chain corresponds to 135 to 146; sequence KHQIDNPGYAHK. A helical membrane pass occupies residues 147–169; that stretch reads SFYYLGGLTEGTETILLFVLGCL. Residues 170 to 173 lie on the Periplasmic side of the membrane; that stretch reads FPAW. Residues 174–196 form a helical membrane-spanning segment; sequence FAWFAWIFGALCWMTTFTRVWSG. Residues 197 to 206 lie on the Cytoplasmic side of the membrane; the sequence is YLTLKSLQRQ.

The protein belongs to the CDP-alcohol phosphatidyltransferase class-I family.

The protein resides in the cell inner membrane. The protein is Inner membrane protein YnjF (ynjF) of Escherichia coli (strain K12).